The primary structure comprises 486 residues: UDP-N-acetylmuramoyl-L-alanyl-D-glutamate--2,6-diaminopimelate ligase (486 aa).

Serine 33 serves as a coordination point for UDP-N-acetyl-alpha-D-muramoyl-L-alanyl-D-glutamate. 110-116 is a binding site for ATP; the sequence is GTNGKTS. UDP-N-acetyl-alpha-D-muramoyl-L-alanyl-D-glutamate is bound by residues 152 to 153, serine 179, glutamine 185, and arginine 187; that span reads TT. Position 219 is an N6-carboxylysine (lysine 219). Residues arginine 383, 407 to 410, glycine 455, and glutamate 459 contribute to the meso-2,6-diaminopimelate site; that span reads DNPR. The Meso-diaminopimelate recognition motif motif lies at 407-410; that stretch reads DNPR.

The protein belongs to the MurCDEF family. MurE subfamily. Mg(2+) is required as a cofactor. Post-translationally, carboxylation is probably crucial for Mg(2+) binding and, consequently, for the gamma-phosphate positioning of ATP.

Its subcellular location is the cytoplasm. It carries out the reaction UDP-N-acetyl-alpha-D-muramoyl-L-alanyl-D-glutamate + meso-2,6-diaminopimelate + ATP = UDP-N-acetyl-alpha-D-muramoyl-L-alanyl-gamma-D-glutamyl-meso-2,6-diaminopimelate + ADP + phosphate + H(+). It participates in cell wall biogenesis; peptidoglycan biosynthesis. Its function is as follows. Catalyzes the addition of meso-diaminopimelic acid to the nucleotide precursor UDP-N-acetylmuramoyl-L-alanyl-D-glutamate (UMAG) in the biosynthesis of bacterial cell-wall peptidoglycan. This chain is UDP-N-acetylmuramoyl-L-alanyl-D-glutamate--2,6-diaminopimelate ligase, found in Zymomonas mobilis subsp. mobilis (strain ATCC 31821 / ZM4 / CP4).